Consider the following 363-residue polypeptide: MSLLYLVALFVASICSVTAQTWTSCNPLTTTCPPDQALGINTTFTFNKTLDDTIWNVTNGVLSHTDEGTEFTITGENQSPTMQSNFYIFFGIVESHVKMAKGAGIISSIVLQSDDLDEIDWEWVGYNTSEVQSNYFGKGNNETFNRGGYHYVPNADTEFHNYTTYWTQEKLEWWIDGKLARTLTYEDSQGAGKYYPQTPCNIRYGIWPAGIKGNAQGTIEWAGGLVDYSKAPFTMVLQSVRVHDFHTGKEYNYTDHSGSWQSIDVIAGNSTIANAIQNPPKSLSEKWAELPTGAKAGVYIGAGCVGAALLAGFIFFFIAQRKKGRLEHALEDAKWANERTEMSTFQNDWKQSEWKHKGYQPVN.

The signal sequence occupies residues 1–19; it reads MSLLYLVALFVASICSVTA. C25 and C32 are oxidised to a cystine. The GH16 domain maps to 26–237; sequence NPLTTTCPPD…YSKAPFTMVL (212 aa). N41, N47, and N56 each carry an N-linked (GlcNAc...) asparagine glycan. The active-site Nucleophile is the E118. Catalysis depends on E122, which acts as the Proton donor. E122 provides a ligand contact to chitin. 3 N-linked (GlcNAc...) asparagine glycosylation sites follow: N127, N141, and N161. Residues R203, W207, and T218 each contribute to the chitin site. Residues N252 and N269 are each glycosylated (N-linked (GlcNAc...) asparagine). Residues 298-318 form a helical membrane-spanning segment; sequence VYIGAGCVGAALLAGFIFFFI.

This sequence belongs to the glycosyl hydrolase 16 family. CRH1 subfamily. Post-translationally, the GPI-like anchor contains a phosphoceramide lipid group. The anchor position has not been determined.

It is found in the cell membrane. It localises to the secreted. Its subcellular location is the cell wall. It catalyses the reaction Random endo-hydrolysis of N-acetyl-beta-D-glucosaminide (1-&gt;4)-beta-linkages in chitin and chitodextrins.. Dual chitinase/transglycosylase that plays a role in cell wall architecture. Chitinase and transglycosylase activities are coupled. Required for the polysaccharide cross-linking at the septa and the cell wall. More specifically, transfers chitin to 1,6-beta-glucan in the cell wall. This Aspergillus fumigatus (strain ATCC MYA-4609 / CBS 101355 / FGSC A1100 / Af293) (Neosartorya fumigata) protein is Crh-like protein 3.